The primary structure comprises 327 residues: Voltage-dependent calcium channel gamma-4 subunit (327 aa).

Residues 1 to 9 (MVRCDRGLQ) are Cytoplasmic-facing. The chain crosses the membrane as a helical span at residues 10–30 (MLLTTAGAFAAFSLMAIAIGT). Over 31-107 (DYWLYSSAHI…EYLLRIVRAS (77 aa)) the chain is Extracellular. N-linked (GlcNAc...) asparagine glycans are attached at residues N42 and N45. Residues 108 to 128 (SVFPILSTILLLLGGLCIGAG) traverse the membrane as a helical segment. Over 129–136 (RIYSRKNN) the chain is Cytoplasmic. Residues 137 to 157 (IVLSAGILFVAAGLSNIIGII) traverse the membrane as a helical segment. Residues 158 to 186 (VYISSNTGDPSDKRDEDKKNHYNYGWSFY) are Extracellular-facing. Residues 187–207 (FGALSFIVAETVGVLAVNIYI) form a helical membrane-spanning segment. Over 208–327 (EKNKELRFKT…SMLNRRTTPV (120 aa)) the chain is Cytoplasmic. The interval 235 to 261 (SYRYRRRRSRSSSRSTEASPSRDVSPM) is disordered. Positions 246 to 256 (SSRSTEASPSR) are enriched in low complexity. Residue S259 is modified to Phosphoserine.

This sequence belongs to the PMP-22/EMP/MP20 family. CACNG subfamily. In terms of assembly, interacts with CACNA1C. Identified in a complex with the L-type calcium channel subunits CACNA1C, CACNA2D1 and either CACNB1 or CACNB2. Acts as an auxiliary subunit for AMPA-selective glutamate receptors (AMPARs). Interacts with GRIA1. As to expression, detected in heart left ventricle.

It localises to the cell membrane. Functionally, regulates the activity of L-type calcium channels that contain CACNA1C as pore-forming subunit. Regulates the trafficking and gating properties of AMPA-selective glutamate receptors (AMPARs), including GRIA1 and GRIA4. Promotes their targeting to the cell membrane and synapses and modulates their gating properties by slowing their rates of activation, deactivation and desensitization and by mediating their resensitization. The protein is Voltage-dependent calcium channel gamma-4 subunit (CACNG4) of Homo sapiens (Human).